Here is a 400-residue protein sequence, read N- to C-terminus: Imidazolonepropionase (400 aa).

Fe(3+)-binding residues include His68 and His70. Zn(2+) contacts are provided by His68 and His70. 3 residues coordinate 4-imidazolone-5-propanoate: Arg77, Tyr140, and His173. An N-formimidoyl-L-glutamate-binding site is contributed by Tyr140. His238 is a binding site for Fe(3+). His238 lines the Zn(2+) pocket. Gln241 provides a ligand contact to 4-imidazolone-5-propanoate. Asp313 is a Fe(3+) binding site. Asp313 contacts Zn(2+). The N-formimidoyl-L-glutamate site is built by Asn315 and Gly317. Residue Thr318 coordinates 4-imidazolone-5-propanoate.

It belongs to the metallo-dependent hydrolases superfamily. HutI family. The cofactor is Zn(2+). Fe(3+) is required as a cofactor.

It localises to the cytoplasm. The catalysed reaction is 4-imidazolone-5-propanoate + H2O = N-formimidoyl-L-glutamate. It participates in amino-acid degradation; L-histidine degradation into L-glutamate; N-formimidoyl-L-glutamate from L-histidine: step 3/3. Functionally, catalyzes the hydrolytic cleavage of the carbon-nitrogen bond in imidazolone-5-propanoate to yield N-formimidoyl-L-glutamate. It is the third step in the universal histidine degradation pathway. This chain is Imidazolonepropionase, found in Paracoccus denitrificans (strain Pd 1222).